A 176-amino-acid chain; its full sequence is Nucleoside triphosphate/diphosphate phosphatase (176 aa).

The Proton donor role is filled by arginine 23. Asparagine 87, aspartate 103, aspartate 105, aspartate 107, aspartate 120, and glutamate 123 together coordinate Mg(2+).

The protein belongs to the Ntdp family. It depends on Mg(2+) as a cofactor.

The enzyme catalyses a ribonucleoside 5'-triphosphate + H2O = a ribonucleoside 5'-diphosphate + phosphate + H(+). It catalyses the reaction a ribonucleoside 5'-diphosphate + H2O = a ribonucleoside 5'-phosphate + phosphate + H(+). Has nucleoside phosphatase activity towards nucleoside triphosphates and nucleoside diphosphates. The polypeptide is Nucleoside triphosphate/diphosphate phosphatase (Bacillus anthracis (strain A0248)).